We begin with the raw amino-acid sequence, 388 residues long: Succinate--CoA ligase [ADP-forming] subunit beta (388 aa).

The ATP-grasp domain maps to 9–244 (KSLFAEYGLP…PSQDDAREAH (236 aa)). Residues K46, 53–55 (GRG), E99, T102, and E107 contribute to the ATP site. N199 and D213 together coordinate Mg(2+). Residues N264 and 321–323 (GIV) contribute to the substrate site.

This sequence belongs to the succinate/malate CoA ligase beta subunit family. In terms of assembly, heterotetramer of two alpha and two beta subunits. Requires Mg(2+) as cofactor.

The enzyme catalyses succinate + ATP + CoA = succinyl-CoA + ADP + phosphate. It carries out the reaction GTP + succinate + CoA = succinyl-CoA + GDP + phosphate. Its pathway is carbohydrate metabolism; tricarboxylic acid cycle; succinate from succinyl-CoA (ligase route): step 1/1. Succinyl-CoA synthetase functions in the citric acid cycle (TCA), coupling the hydrolysis of succinyl-CoA to the synthesis of either ATP or GTP and thus represents the only step of substrate-level phosphorylation in the TCA. The beta subunit provides nucleotide specificity of the enzyme and binds the substrate succinate, while the binding sites for coenzyme A and phosphate are found in the alpha subunit. The sequence is that of Succinate--CoA ligase [ADP-forming] subunit beta from Shewanella sp. (strain MR-4).